The sequence spans 305 residues: tRNA dimethylallyltransferase (305 aa).

ATP is bound at residue 11-18; sequence GPTAVGKT. 13–18 contacts substrate; sequence TAVGKT. Residues 36–39 are interaction with substrate tRNA; sequence DSMQ.

It belongs to the IPP transferase family. Monomer. The cofactor is Mg(2+).

It carries out the reaction adenosine(37) in tRNA + dimethylallyl diphosphate = N(6)-dimethylallyladenosine(37) in tRNA + diphosphate. Catalyzes the transfer of a dimethylallyl group onto the adenine at position 37 in tRNAs that read codons beginning with uridine, leading to the formation of N6-(dimethylallyl)adenosine (i(6)A). The protein is tRNA dimethylallyltransferase of Listeria innocua serovar 6a (strain ATCC BAA-680 / CLIP 11262).